The chain runs to 889 residues: Serine/threonine-protein kinase D3 (889 aa).

S27, S37, S41, and S44 each carry phosphoserine. The Phorbol-ester/DAG-type 1 zinc finger occupies 154–204; it reads PHALYVHSYKAPTFCDYCGEMLWGLVRQGLKCEGCGLNYHKRCAFKIPNNC. 2 positions are modified to phosphoserine: S213 and S216. The Phorbol-ester/DAG-type 2 zinc finger occupies 271-321; that stretch reads PHTFAVHSYGRPTICQYCKRLLKGLFRQGMQCKDCKFNCHKRCASKVPRDC. The segment at 336–370 is disordered; the sequence is TDADMPMDIDSSDVNSDGSRGLDDSEEPSPPEDKM. Phosphoserine is present on residues S346, S391, and S395. One can recognise a PH domain in the interval 416–532; sequence TVVKEGWMVH…WEKAIRQALM (117 aa). Y426 carries the phosphotyrosine modification. S442 is subject to Phosphoserine. The residue at position 457 (Y457) is a Phosphotyrosine. T535 is subject to Phosphothreonine. S539 is modified (phosphoserine). Positions 575–831 constitute a Protein kinase domain; sequence IFADEVLGSG…VDKSLSHPWL (257 aa). ATP is bound by residues 581–589 and K604; that span reads LGSGQFGIV. The Proton acceptor role is filled by D698. S730 carries the post-translational modification Phosphoserine; by PKC. S734 carries the post-translational modification Phosphoserine; by autocatalysis. Y741 is subject to Phosphotyrosine.

This sequence belongs to the protein kinase superfamily. CAMK Ser/Thr protein kinase family. PKD subfamily. It depends on Mg(2+) as a cofactor.

Its subcellular location is the cytoplasm. It is found in the membrane. The catalysed reaction is L-seryl-[protein] + ATP = O-phospho-L-seryl-[protein] + ADP + H(+). It carries out the reaction L-threonyl-[protein] + ATP = O-phospho-L-threonyl-[protein] + ADP + H(+). With respect to regulation, activated by DAG and phorbol esters. Phorbol-ester/DAG-type domains 1 and 2 bind both DAG and phorbol ester with high affinity and mediate translocation to the cell membrane. Autophosphorylation of Ser-734 and phosphorylation of Ser-730 by PKC relieves auto-inhibition by the PH domain. Its function is as follows. Converts transient diacylglycerol (DAG) signals into prolonged physiological effects, downstream of PKC. Involved in resistance to oxidative stress. The polypeptide is Serine/threonine-protein kinase D3 (Prkd3) (Mus musculus (Mouse)).